A 60-amino-acid polypeptide reads, in one-letter code: Putative mercuric resistance protein (60 aa).

This chain is Putative mercuric resistance protein, found in Shigella flexneri.